A 73-amino-acid polypeptide reads, in one-letter code: Large ribosomal subunit protein bL31 (73 aa).

Zn(2+)-binding residues include cysteine 16, cysteine 18, cysteine 37, and cysteine 40.

It belongs to the bacterial ribosomal protein bL31 family. Type A subfamily. Part of the 50S ribosomal subunit. It depends on Zn(2+) as a cofactor.

Binds the 23S rRNA. This is Large ribosomal subunit protein bL31 from Pseudomonas savastanoi pv. phaseolicola (strain 1448A / Race 6) (Pseudomonas syringae pv. phaseolicola (strain 1448A / Race 6)).